The primary structure comprises 590 residues: Guanylate-binding protein 1 (590 aa).

The segment at 1–309 (MASEIHMTGP…NAISSGDLPC (309 aa)) is GTPase domain (Globular). Residues 35 to 276 (TQPVVVVAIV…FCSYIFSNSK (242 aa)) enclose the GB1/RHD3-type G domain. Residues 45–52 (GLYRTGKS), 67–69 (LGS), and 97–101 (DTEGL) each bind GTP. A Phosphoserine modification is found at Ser156. Cys587 is modified (cysteine methyl ester). Cys587 carries S-farnesyl cysteine lipidation. Phosphothreonine is present on Thr588. Residues 588–590 (TIS) constitute a propeptide, removed in mature form.

Belongs to the TRAFAC class dynamin-like GTPase superfamily. GB1/RHD3 GTPase family. GB1 subfamily. Homodimer; homodimerization occurs upon GTP-binding and is required for the second hydrolysis step from GDP to GMP. Undergoes conformational changes and oligomerization upon GTP-binding and hydrolysis. Heterodimer with other family members, including GBP2, GBP3, GBP4 and GBP5. Dimerization regulates subcellular location to membranous structures. Interacts with SQSTM1. Interacts (when phosphorylated) with 14-3-3 protein sigma (SFN); leading to GBP1 retention in the cytosol and inactivation. Post-translationally, isoprenylation is required for proper subcellular location. In terms of processing, phosphorylated at Ser-156 by PIM1 in absence of infection, inhibits GBP1: phosphorylation promotes interaction with 14-3-3 protein sigma (SFN), leading to GBP1 retention in the cytosol. Dephosphorylated in response to infection, liberating GBP1.

The protein localises to the cytoplasmic vesicle membrane. It localises to the golgi apparatus membrane. Its subcellular location is the cell membrane. The protein resides in the cytoplasm. It is found in the cytosol. The protein localises to the secreted. It catalyses the reaction GTP + H2O = GDP + phosphate + H(+). The catalysed reaction is GDP + H2O = GMP + phosphate + H(+). Functionally, interferon (IFN)-inducible GTPase that plays important roles in innate immunity against a diverse range of bacterial, viral and protozoan pathogens. Hydrolyzes GTP to GMP in two consecutive cleavage reactions: GTP is first hydrolyzed to GDP and then to GMP in a processive manner. Following infection, recruited to the pathogen-containing vacuoles or vacuole-escaped bacteria and promotes both inflammasome assembly and autophagy. Acts as a positive regulator of inflammasome assembly by facilitating the detection of inflammasome ligands from pathogens. Involved in the lysis of pathogen-containing vacuoles, releasing pathogens into the cytosol. Following pathogen release in the cytosol, forms a protein coat in a GTPase-dependent manner that encapsulates pathogens and promotes the detection of ligands by pattern recognition receptors. Plays a key role in inflammasome assembly in response to infection by Gram-negative bacteria: following pathogen release in the cytosol, forms a protein coat that encapsulates Gram-negative bacteria and directly binds to lipopolysaccharide (LPS), disrupting the O-antigen barrier and unmasking lipid A that is that detected by the non-canonical inflammasome effector CASP4/CASP11. Also promotes recruitment of proteins that mediate bacterial cytolysis, leading to release double-stranded DNA (dsDNA) that activates the AIM2 inflammasome. Involved in autophagy by regulating bacteriolytic peptide generation via its interaction with ubiquitin-binding protein SQSTM1, which delivers monoubiquitinated proteins to autolysosomes for the generation of bacteriolytic peptides. Confers protection to several pathogens, including the bacterial pathogens L.monocytogenes and M.bovis BCG as well as the protozoan pathogen T.gondii. Exhibits antiviral activity against influenza virus. The protein is Guanylate-binding protein 1 (GBP1) of Chlorocebus aethiops (Green monkey).